A 140-amino-acid polypeptide reads, in one-letter code: Endoribonuclease YbeY (140 aa).

Residues His100, His104, and His110 each coordinate Zn(2+).

It belongs to the endoribonuclease YbeY family. The cofactor is Zn(2+).

It localises to the cytoplasm. Its function is as follows. Single strand-specific metallo-endoribonuclease involved in late-stage 70S ribosome quality control and in maturation of the 3' terminus of the 16S rRNA. This chain is Endoribonuclease YbeY, found in Helicobacter pylori (strain P12).